The sequence spans 471 residues: UDP-glycosyltransferase 71A15 (471 aa).

Residues S282, 348-349 (WA), 366-374 (HCGWNSTLE), and 388-391 (YAEQ) contribute to the UDP-alpha-D-glucose site.

Belongs to the UDP-glycosyltransferase family.

In terms of biological role, glycosyltransferase that possesses chalcone and flavonol 2'-O-glycosyltransferase activity. Converts phloretin to phlorizin (phloretin 2'-O-glucoside), a potent antioxidant. Possesses glycosyltransferase activity toward, naringenin, naringenin chalcone, eriodictyol, eriodictyol chalcone, apigenin, luteolin, kaempferol, quercetin, isoliquiritigenin, butein and caffeic acid. Can convert phloretin to phloretin 4'-O-glucoside and phloretin 4-O-glucoside. This chain is UDP-glycosyltransferase 71A15, found in Malus domestica (Apple).